The sequence spans 360 residues: Geranylgeranyl pyrophosphate synthase 3, chloroplastic (360 aa).

The N-terminal 39 residues, 1–39 (MATTVHLSSFSLFIQSRGRRDNSISSVKSLKKRTGLSPS), are a transit peptide targeting the chloroplast. The segment at 24-54 (ISSVKSLKKRTGLSPSSALTSQGGRDMIPPE) is disordered. A compositionally biased stretch (polar residues) spans 36–46 (LSPSSALTSQG). Isopentenyl diphosphate is bound by residues Lys106, Arg109, and His138. Mg(2+)-binding residues include Asp145 and Asp151. A dimethylallyl diphosphate-binding site is contributed by Arg156. Residue Arg157 participates in isopentenyl diphosphate binding. Dimethylallyl diphosphate is bound by residues Lys245, Thr246, Gln283, Lys300, and Lys310.

It belongs to the FPP/GGPP synthase family. As to quaternary structure, monomer. The cofactor is Mg(2+). As to expression, mainly expressed in roots.

The protein resides in the plastid. It is found in the chloroplast. The enzyme catalyses isopentenyl diphosphate + dimethylallyl diphosphate = (2E)-geranyl diphosphate + diphosphate. The catalysed reaction is isopentenyl diphosphate + (2E)-geranyl diphosphate = (2E,6E)-farnesyl diphosphate + diphosphate. It catalyses the reaction isopentenyl diphosphate + (2E,6E)-farnesyl diphosphate = (2E,6E,10E)-geranylgeranyl diphosphate + diphosphate. The protein operates within isoprenoid biosynthesis; farnesyl diphosphate biosynthesis; farnesyl diphosphate from geranyl diphosphate and isopentenyl diphosphate: step 1/1. It participates in isoprenoid biosynthesis; geranyl diphosphate biosynthesis; geranyl diphosphate from dimethylallyl diphosphate and isopentenyl diphosphate: step 1/1. Its pathway is isoprenoid biosynthesis; geranylgeranyl diphosphate biosynthesis; geranylgeranyl diphosphate from farnesyl diphosphate and isopentenyl diphosphate: step 1/1. Its function is as follows. Catalyzes the trans-addition of the three molecules of IPP onto DMAPP to form geranylgeranyl pyrophosphate. This Arabidopsis thaliana (Mouse-ear cress) protein is Geranylgeranyl pyrophosphate synthase 3, chloroplastic (GGPP3).